The sequence spans 154 residues: Large ribosomal subunit protein uL13 (154 aa).

It belongs to the universal ribosomal protein uL13 family. As to quaternary structure, part of the 50S ribosomal subunit.

Its function is as follows. This protein is one of the early assembly proteins of the 50S ribosomal subunit, although it is not seen to bind rRNA by itself. It is important during the early stages of 50S assembly. The protein is Large ribosomal subunit protein uL13 of Rhizobium etli (strain CIAT 652).